The chain runs to 290 residues: S-adenosylmethionine decarboxylase proenzyme (290 aa).

The Schiff-base intermediate with substrate; via pyruvic acid role is filled by S138. The residue at position 138 (S138) is a Pyruvic acid (Ser); by autocatalysis. H143 (proton acceptor; for processing activity) is an active-site residue. C166 acts as the Proton donor; for catalytic activity in catalysis.

It belongs to the prokaryotic AdoMetDC family. Type 2 subfamily. As to quaternary structure, heterooctamer of four alpha and four beta chains arranged as a tetramer of alpha/beta heterodimers. Requires pyruvate as cofactor. Is synthesized initially as an inactive proenzyme. Formation of the active enzyme involves a self-maturation process in which the active site pyruvoyl group is generated from an internal serine residue via an autocatalytic post-translational modification. Two non-identical subunits are generated from the proenzyme in this reaction, and the pyruvate is formed at the N-terminus of the alpha chain, which is derived from the carboxyl end of the proenzyme. The post-translation cleavage follows an unusual pathway, termed non-hydrolytic serinolysis, in which the side chain hydroxyl group of the serine supplies its oxygen atom to form the C-terminus of the beta chain, while the remainder of the serine residue undergoes an oxidative deamination to produce ammonia and the pyruvoyl group blocking the N-terminus of the alpha chain.

It catalyses the reaction S-adenosyl-L-methionine + H(+) = S-adenosyl 3-(methylsulfanyl)propylamine + CO2. It participates in amine and polyamine biosynthesis; S-adenosylmethioninamine biosynthesis; S-adenosylmethioninamine from S-adenosyl-L-methionine: step 1/1. Functionally, catalyzes the decarboxylation of S-adenosylmethionine to S-adenosylmethioninamine (dcAdoMet), the propylamine donor required for the synthesis of the polyamines spermine and spermidine from the diamine putrescine. The sequence is that of S-adenosylmethionine decarboxylase proenzyme from Heliobacterium modesticaldum (strain ATCC 51547 / Ice1).